We begin with the raw amino-acid sequence, 155 residues long: Ribosome maturation factor RimP (155 aa).

The protein belongs to the RimP family.

It localises to the cytoplasm. Its function is as follows. Required for maturation of 30S ribosomal subunits. The chain is Ribosome maturation factor RimP from Listeria welshimeri serovar 6b (strain ATCC 35897 / DSM 20650 / CCUG 15529 / CIP 8149 / NCTC 11857 / SLCC 5334 / V8).